The following is a 120-amino-acid chain: Large ribosomal subunit protein bL17 (120 aa).

Belongs to the bacterial ribosomal protein bL17 family. Part of the 50S ribosomal subunit. Contacts protein L32.

The polypeptide is Large ribosomal subunit protein bL17 (Desulforapulum autotrophicum (strain ATCC 43914 / DSM 3382 / VKM B-1955 / HRM2) (Desulfobacterium autotrophicum)).